We begin with the raw amino-acid sequence, 418 residues long: Tyrosine--tRNA ligase (418 aa).

An L-tyrosine-binding site is contributed by Y38. A 'HIGH' region motif is present at residues 43-52; sequence CTARSLHIGS. L-tyrosine-binding residues include Y175 and Q179. Positions 235-239 match the 'KMSKS' region motif; sequence KMGKT. Position 238 (K238) interacts with ATP. The S4 RNA-binding domain maps to 348–413; the sequence is LSVVKLLQVS…CGKKRHLKVV (66 aa).

This sequence belongs to the class-I aminoacyl-tRNA synthetase family. TyrS type 1 subfamily. In terms of assembly, homodimer.

The protein localises to the cytoplasm. It carries out the reaction tRNA(Tyr) + L-tyrosine + ATP = L-tyrosyl-tRNA(Tyr) + AMP + diphosphate + H(+). Its function is as follows. Catalyzes the attachment of tyrosine to tRNA(Tyr) in a two-step reaction: tyrosine is first activated by ATP to form Tyr-AMP and then transferred to the acceptor end of tRNA(Tyr). The chain is Tyrosine--tRNA ligase from Ehrlichia ruminantium (strain Welgevonden).